A 201-amino-acid chain; its full sequence is NADH-quinone oxidoreductase subunit B 1 (201 aa).

4 residues coordinate [4Fe-4S] cluster: Cys80, Cys81, Cys145, and Cys175.

It belongs to the complex I 20 kDa subunit family. As to quaternary structure, NDH-1 is composed of 14 different subunits. Subunits NuoB, C, D, E, F, and G constitute the peripheral sector of the complex. Requires [4Fe-4S] cluster as cofactor.

It is found in the cell inner membrane. The catalysed reaction is a quinone + NADH + 5 H(+)(in) = a quinol + NAD(+) + 4 H(+)(out). Functionally, NDH-1 shuttles electrons from NADH, via FMN and iron-sulfur (Fe-S) centers, to quinones in the respiratory chain. The immediate electron acceptor for the enzyme in this species is believed to be ubiquinone. Couples the redox reaction to proton translocation (for every two electrons transferred, four hydrogen ions are translocated across the cytoplasmic membrane), and thus conserves the redox energy in a proton gradient. The protein is NADH-quinone oxidoreductase subunit B 1 of Rhodopseudomonas palustris (strain BisB18).